We begin with the raw amino-acid sequence, 636 residues long: 1-deoxy-D-xylulose-5-phosphate synthase (636 aa).

Residues histidine 75 and 116–118 contribute to the thiamine diphosphate site; that span reads AHS. Aspartate 147 contacts Mg(2+). Residues 148–149, asparagine 177, tyrosine 288, and glutamate 370 each bind thiamine diphosphate; that span reads GA. Position 177 (asparagine 177) interacts with Mg(2+).

The protein belongs to the transketolase family. DXPS subfamily. Homodimer. It depends on Mg(2+) as a cofactor. The cofactor is thiamine diphosphate.

The catalysed reaction is D-glyceraldehyde 3-phosphate + pyruvate + H(+) = 1-deoxy-D-xylulose 5-phosphate + CO2. It functions in the pathway metabolic intermediate biosynthesis; 1-deoxy-D-xylulose 5-phosphate biosynthesis; 1-deoxy-D-xylulose 5-phosphate from D-glyceraldehyde 3-phosphate and pyruvate: step 1/1. Its function is as follows. Catalyzes the acyloin condensation reaction between C atoms 2 and 3 of pyruvate and glyceraldehyde 3-phosphate to yield 1-deoxy-D-xylulose-5-phosphate (DXP). In Ralstonia nicotianae (strain ATCC BAA-1114 / GMI1000) (Ralstonia solanacearum), this protein is 1-deoxy-D-xylulose-5-phosphate synthase.